The sequence spans 44 residues: Protein PsbN (44 aa).

The chain crosses the membrane as a helical span at residues 6–26 (FFFTLFLWFFLLSITIYSIYI).

It belongs to the PsbN family.

It localises to the plastid. Its subcellular location is the chloroplast thylakoid membrane. Functionally, may play a role in photosystem I and II biogenesis. This is Protein PsbN from Oedogonium cardiacum (Filamentous green alga).